A 314-amino-acid chain; its full sequence is Olfactory receptor-like protein I9 (314 aa).

Residues 1–25 (MTRRNQTAISQFFLLGLPFPPEYQH) are Extracellular-facing. N-linked (GlcNAc...) asparagine glycosylation is present at N5. A helical transmembrane segment spans residues 26–50 (LFYALFLAMYLTTLLGNLIIIILIL). The Cytoplasmic portion of the chain corresponds to 51–57 (LDSHLHT). The chain crosses the membrane as a helical span at residues 58–79 (PMYLFLSNLSFADLCFSSVTMP). The Extracellular portion of the chain corresponds to 80–100 (KLLQNMQSQVPSIPYAGCLAQ). C97 and C189 are oxidised to a cystine. A helical membrane pass occupies residues 101–120 (IYFFLFFGDLGNFLLVAMAY). Topologically, residues 121–139 (DRYVAICFPLHYMSIMSPK) are cytoplasmic. The chain crosses the membrane as a helical span at residues 140-158 (LCVSLVVLSWVLTTFHAML). At 159–196 (HTLLMARLSFCEDSVIPHYFCDMSTLLKVACSDTHDNE) the chain is on the extracellular side. Residues 197–219 (LAIFILGGPIVVLPFLLIIVSYA) form a helical membrane-spanning segment. At 220–236 (RIVSSIFKVPSSQSIHK) the chain is on the cytoplasmic side. A helical transmembrane segment spans residues 237–260 (AFSTCGSHLSVVSLFYGTVIGLYL). Over 261-272 (CPSANNSTVKET) the chain is Extracellular. The helical transmembrane segment at 273-292 (VMSLMYTMVTPMLNPFIYSL) threads the bilayer. Over 293 to 314 (RNRDIKDALEKIMCKKQIPSFL) the chain is Cytoplasmic.

This sequence belongs to the G-protein coupled receptor 1 family. As to expression, olfactory epithelium.

It is found in the cell membrane. In terms of biological role, odorant receptor. This is Olfactory receptor-like protein I9 from Rattus norvegicus (Rat).